A 208-amino-acid chain; its full sequence is Effector protein MavE (208 aa).

Residues 77–80 (NPRY) carry the NPxY eukaryotic motif motif. Residues 184-204 (VLFPFVAATVAVAATAASVLF) form a helical membrane-spanning segment.

Homotrimer.

The protein resides in the secreted. It localises to the host vacuole. Its subcellular location is the host pathogen-containing vacuole. It is found in the host pathogen-containing vacuole membrane. Functionally, virulence effector that is indispensable for endoplasmic reticulum (ER)-mediated remodeling of the Legionella pneumophila-containing vacuole (LCV) and lysosomal evasion. Essential for intracellular replication in human monocyte-derived macrophages (hMDMs) and amoebae, as well as for intrapulmonary proliferation in mice. The protein is Effector protein MavE of Legionella pneumophila subsp. pneumophila (strain Philadelphia 1 / ATCC 33152 / DSM 7513).